Here is a 269-residue protein sequence, read N- to C-terminus: tRNA pseudouridine synthase A (269 aa).

The Nucleophile role is filled by aspartate 51. Residue tyrosine 109 participates in substrate binding.

It belongs to the tRNA pseudouridine synthase TruA family. Homodimer.

It carries out the reaction uridine(38/39/40) in tRNA = pseudouridine(38/39/40) in tRNA. Its function is as follows. Formation of pseudouridine at positions 38, 39 and 40 in the anticodon stem and loop of transfer RNAs. The protein is tRNA pseudouridine synthase A of Aeromonas hydrophila subsp. hydrophila (strain ATCC 7966 / DSM 30187 / BCRC 13018 / CCUG 14551 / JCM 1027 / KCTC 2358 / NCIMB 9240 / NCTC 8049).